We begin with the raw amino-acid sequence, 236 residues long: Orotidine 5'-phosphate decarboxylase (236 aa).

Substrate contacts are provided by residues D17, K39, 66 to 75 (DLKFHDIPNT), T125, R186, Q195, G215, and R216. K68 (proton donor) is an active-site residue.

This sequence belongs to the OMP decarboxylase family. Type 1 subfamily. Homodimer.

The catalysed reaction is orotidine 5'-phosphate + H(+) = UMP + CO2. It participates in pyrimidine metabolism; UMP biosynthesis via de novo pathway; UMP from orotate: step 2/2. Its function is as follows. Catalyzes the decarboxylation of orotidine 5'-monophosphate (OMP) to uridine 5'-monophosphate (UMP). The chain is Orotidine 5'-phosphate decarboxylase from Buchnera aphidicola subsp. Schizaphis graminum (strain Sg).